The sequence spans 425 residues: O-methyltransferase AMT9 (425 aa).

S-adenosyl-L-methionine-binding positions include 257 to 258 (GG), aspartate 280, 306 to 307 (DF), arginine 322, and arginine 323. Histidine 326 (proton acceptor) is an active-site residue.

It belongs to the class I-like SAM-binding methyltransferase superfamily. Cation-independent O-methyltransferase family.

Its pathway is mycotoxin biosynthesis. Its function is as follows. O-methyltransferase; part of the gene clusters that mediate the biosynthesis of AM-toxins, host-selective toxins (HSTs) causing Alternaria blotch on apple, a worldwide distributed disease. AM-toxins are cyclic depsipeptides containing the 3 residues 2-hydroxy-isovaleric acid (2-HIV), dehydroalanine, L-alanine which are common for all 3 AM-toxins I to III. The fourth precursor is L-alpha-amino-methoxyphenyl-valeric acid (L-Amv) for AM-toxin I, L-alpha-amino-phenyl-valeric acid (L-Apv) for AM-toxin II, and L-alpha-amino-hydroxyphenyl-valeric acid (L-Ahv) for AM-toxin III. AM-toxins have two target sites for affecting susceptible apple cells; they cause invagination of the plasma membrane and electrolyte loss and chloroplast disorganization. The non-ribosomal peptide synthetase AMT1 contains 4 catalytic modules and is responsible for activation of each residue in AM-toxin. The aldo-keto reductase AMT2 catalyzes the conversion of 2-keto-isovaleric acid (2-KIV) to 2-hydroxy-isovaleric acid (2-HIV), one of the precursor residues incorporated by AMT1 during AM-toxin biosynthesis, by reduction of its ketone to an alcohol. The cytochrome P450 monooxygenase AMT3 and the thioesterase AMT4 are also important for AM-toxin production, but their exact function within the AM-toxin biosynthesis are not known yet. Up to 21 proteins (including AMT1 to AMT4) are predicted to be involved in AM-toxin biosynthesis since their expression ishighly up-regulated in AM-toxin-producing cultures. The protein is O-methyltransferase AMT9 of Alternaria alternata (Alternaria rot fungus).